Reading from the N-terminus, the 226-residue chain is UPF0173 metal-dependent hydrolase Fnod_0635 (226 aa).

This sequence belongs to the UPF0173 family.

The polypeptide is UPF0173 metal-dependent hydrolase Fnod_0635 (Fervidobacterium nodosum (strain ATCC 35602 / DSM 5306 / Rt17-B1)).